Here is a 172-residue protein sequence, read N- to C-terminus: NAD(P)H-quinone oxidoreductase subunit I, chloroplastic (172 aa).

4Fe-4S ferredoxin-type domains lie at 55–84 and 95–124; these read GRIHFEFDKCIACEVCVRVCPIDLPVVDWK and LNYSIDFGICIFCGNCVEYCPTNCLSMTEE. Residues Cys64, Cys67, Cys70, Cys74, Cys104, Cys107, Cys110, and Cys114 each coordinate [4Fe-4S] cluster.

It belongs to the complex I 23 kDa subunit family. NDH is composed of at least 16 different subunits, 5 of which are encoded in the nucleus. [4Fe-4S] cluster serves as cofactor.

Its subcellular location is the plastid. It is found in the chloroplast thylakoid membrane. The catalysed reaction is a plastoquinone + NADH + (n+1) H(+)(in) = a plastoquinol + NAD(+) + n H(+)(out). It catalyses the reaction a plastoquinone + NADPH + (n+1) H(+)(in) = a plastoquinol + NADP(+) + n H(+)(out). NDH shuttles electrons from NAD(P)H:plastoquinone, via FMN and iron-sulfur (Fe-S) centers, to quinones in the photosynthetic chain and possibly in a chloroplast respiratory chain. The immediate electron acceptor for the enzyme in this species is believed to be plastoquinone. Couples the redox reaction to proton translocation, and thus conserves the redox energy in a proton gradient. The sequence is that of NAD(P)H-quinone oxidoreductase subunit I, chloroplastic from Arabidopsis thaliana (Mouse-ear cress).